The sequence spans 286 residues: 33 kDa chaperonin (286 aa).

2 disulfides stabilise this stretch: Cys236-Cys238 and Cys264-Cys267.

It belongs to the HSP33 family. Post-translationally, under oxidizing conditions two disulfide bonds are formed involving the reactive cysteines. Under reducing conditions zinc is bound to the reactive cysteines and the protein is inactive.

It is found in the cytoplasm. Its function is as follows. Redox regulated molecular chaperone. Protects both thermally unfolding and oxidatively damaged proteins from irreversible aggregation. Plays an important role in the bacterial defense system toward oxidative stress. The chain is 33 kDa chaperonin from Carboxydothermus hydrogenoformans (strain ATCC BAA-161 / DSM 6008 / Z-2901).